A 580-amino-acid polypeptide reads, in one-letter code: Glutathione hydrolase proenzyme (580 aa).

The signal sequence occupies residues 1-25 (MIKPTFLRRVAIAALLSGSCFSAAA). L-glutamate is bound at residue arginine 114. The active-site Nucleophile is threonine 391. Residues threonine 409, asparagine 411, glutamine 430, aspartate 433, 462-463 (SS), and 483-484 (GG) contribute to the L-glutamate site. Positions 561 to 580 (DGELYGASDPRSVDDLTAGY) are disordered.

This sequence belongs to the gamma-glutamyltransferase family. This enzyme consists of two polypeptide chains, which are synthesized in precursor form from a single polypeptide. In terms of processing, cleaved by autocatalysis into a large and a small subunit.

The protein resides in the periplasm. The enzyme catalyses an N-terminal (5-L-glutamyl)-[peptide] + an alpha-amino acid = 5-L-glutamyl amino acid + an N-terminal L-alpha-aminoacyl-[peptide]. The catalysed reaction is glutathione + H2O = L-cysteinylglycine + L-glutamate. It catalyses the reaction an S-substituted glutathione + H2O = an S-substituted L-cysteinylglycine + L-glutamate. It functions in the pathway sulfur metabolism; glutathione metabolism. With respect to regulation, transferase and hydrolase activities are inhibited by L-Ala and L-Gln, and also by GGT affinity labeling reagents such as azaserine and 6-diazo-5-oxo-nor-leucine. Functionally, cleaves the gamma-glutamyl bond of periplasmic glutathione (gamma-Glu-Cys-Gly), glutathione conjugates, and other gamma-glutamyl compounds. The metabolism of glutathione releases free glutamate and the dipeptide cysteinyl-glycine, which is hydrolyzed to cysteine and glycine by dipeptidases; it may function in amino acid uptake/salvage, or possibly in peptidoglycan linkage. Catalyzes the hydrolysis and transpeptidation of many gamma-glutamyl compounds (including some D-gamma-glutamyl substrates), with a preference for basic and aromatic amino acids as acceptors. The KM values for gamma-glutamyl acceptors are so high that it has been proposed transpeptidation is not the physiological role in E.coli. This Escherichia coli (strain K12) protein is Glutathione hydrolase proenzyme (ggt).